The sequence spans 1026 residues: Glutactin (1026 aa).

Residues 1–17 (MKPLLLVLALCGAQVHA) form the signal peptide. Tyr-26 and Tyr-29 each carry sulfotyrosine. Asn-115 carries an N-linked (GlcNAc...) asparagine glycan. A disulfide bridge links Cys-123 with Cys-145. Sulfotyrosine is present on Tyr-182. Residues Cys-298 and Cys-316 are joined by a disulfide bond. N-linked (GlcNAc...) asparagine glycans are attached at residues Asn-368 and Asn-402. At Tyr-559 the chain carries Sulfotyrosine. Residues 601 to 641 (PITTTTTTTTTTTTTSRPYAYNPYANWQNRPSQQHPNWHPA) form a disordered region. Residues 603–615 (TTTTTTTTTTTTT) are compositionally biased toward low complexity. A compositionally biased stretch (polar residues) spans 625 to 636 (ANWQNRPSQQHP). Tyr-645 carries the post-translational modification Sulfotyrosine. Disordered stretches follow at residues 659 to 695 (EREQ…REQE) and 723 to 1026 (EREQ…NSRN). The segment covering 723 to 752 (EREQYEREQQEREQREREELERQQREREQQ) has biased composition (basic and acidic residues). Sulfotyrosine is present on Tyr-727. Residue Asn-810 is glycosylated (N-linked (GlcNAc...) asparagine). Residues 811-854 (FSEEDREQQQQEQLRREQQEQQEREYQLQLEREQQEREQQERGQ) are compositionally biased toward basic and acidic residues. Residues Tyr-836, Tyr-862, Tyr-865, Tyr-868, Tyr-922, and Tyr-928 each carry the sulfotyrosine modification. Residues 855–866 (QEPGPEEYPSYE) are compositionally biased toward low complexity. The segment covering 867–893 (EYSRALQEKNAERDRIYAEEQERERQQ) has biased composition (basic and acidic residues). Residues 923 to 944 (DGDRSYAEEQEREQQRRDQVEQ) show a composition bias toward basic and acidic residues. Acidic residues predominate over residues 945–969 (EREEQPDEDQGEEYERSPDEEEAAE). Sulfotyrosine is present on residues Tyr-981, Tyr-984, and Tyr-1006. Residues 1002–1026 (EEERYRAQQEEEDRIQAERERNSRN) show a composition bias toward basic and acidic residues.

The protein in the N-terminal section; belongs to the type-B carboxylesterase/lipase family. Post-translationally, extensively O-glycosylated and also N-glycosylated. About four tyrosines are sulfated.

The protein resides in the secreted. It is found in the extracellular space. The protein localises to the extracellular matrix. Its subcellular location is the basement membrane. Functionally, not known. Binds calcium ions. The polypeptide is Glutactin (Glt) (Drosophila melanogaster (Fruit fly)).